A 407-amino-acid polypeptide reads, in one-letter code: Ribonuclease Z (407 aa).

Residues 1–308 are ribonuclease Z; sequence MEITFLGTSS…QDFLHYAIPR (308 aa). Residues H62, H64, D66, H67, H139, D210, and H268 each coordinate Zn(2+). The active-site Proton acceptor is the D66. Residues 309–407 form a unknown region; sequence DGQICAEMPP…VDWSALNVLF (99 aa).

This sequence belongs to the RNase Z family. In terms of assembly, homodimer. Zn(2+) is required as a cofactor.

It carries out the reaction Endonucleolytic cleavage of RNA, removing extra 3' nucleotides from tRNA precursor, generating 3' termini of tRNAs. A 3'-hydroxy group is left at the tRNA terminus and a 5'-phosphoryl group is left at the trailer molecule.. Its function is as follows. Zinc phosphodiesterase, which displays some tRNA 3'-processing endonuclease activity. Probably involved in tRNA maturation, by removing a 3'-trailer from precursor tRNA. In Thermosynechococcus vestitus (strain NIES-2133 / IAM M-273 / BP-1), this protein is Ribonuclease Z (rnz).